A 476-amino-acid chain; its full sequence is Argininosuccinate lyase (476 aa).

Belongs to the lyase 1 family. Argininosuccinate lyase subfamily.

It is found in the cytoplasm. The catalysed reaction is 2-(N(omega)-L-arginino)succinate = fumarate + L-arginine. It participates in amino-acid biosynthesis; L-arginine biosynthesis; L-arginine from L-ornithine and carbamoyl phosphate: step 3/3. This is Argininosuccinate lyase from Thermobifida fusca (strain YX).